A 490-amino-acid chain; its full sequence is GTPase Der (490 aa).

EngA-type G domains are found at residues 3–166 (PVVA…MDDV) and 203–376 (IKLA…DSST). GTP-binding positions include 9 to 16 (GRPNVGKS), 56 to 60 (DTGGI), 118 to 121 (NKTD), 209 to 216 (GRPNVGKS), 256 to 260 (DTAGV), and 321 to 324 (NKWD). One can recognise a KH-like domain in the interval 377-461 (RRVSTAMLTR…PIRIQFKEGE (85 aa)).

The protein belongs to the TRAFAC class TrmE-Era-EngA-EngB-Septin-like GTPase superfamily. EngA (Der) GTPase family. In terms of assembly, associates with the 50S ribosomal subunit.

Functionally, GTPase that plays an essential role in the late steps of ribosome biogenesis. The protein is GTPase Der of Salmonella enteritidis PT4 (strain P125109).